Reading from the N-terminus, the 245-residue chain is Octopine transport system permease protein OccM (245 aa).

5 consecutive transmembrane segments (helical) span residues F12–V32, F57–G77, A96–M116, V163–I183, and A199–I219. Positions I19–F216 constitute an ABC transmembrane type-1 domain.

It belongs to the binding-protein-dependent transport system permease family. HisMQ subfamily.

The protein resides in the cell inner membrane. Component of the octopine active transport system probably consisting of four subunits: Q, M, P and T. This chain is Octopine transport system permease protein OccM (occM), found in Rhizobium meliloti (Ensifer meliloti).